A 146-amino-acid chain; its full sequence is Ecotin-like protein 1 (146 aa).

Belongs to the protease inhibitor I11 (ecotin) family.

The protein is Ecotin-like protein 1 (ISP1) of Leishmania infantum.